We begin with the raw amino-acid sequence, 234 residues long: Sugar fermentation stimulation protein homolog (234 aa).

It belongs to the SfsA family.

The protein is Sugar fermentation stimulation protein homolog of Shewanella halifaxensis (strain HAW-EB4).